Consider the following 349-residue polypeptide: C-X-C chemokine receptor type 1 (349 aa).

Residues 1–44 lie on the Extracellular side of the membrane; it reads MAEAEYFIWIAPEGDFEEEFGNITRMLPTGEYFSPCKRVPMTNR. The N-linked (GlcNAc...) asparagine glycan is linked to N22. Residues 45–71 form a helical membrane-spanning segment; that stretch reads QAVVVFYALVFLLSLLGNSLVMLVILY. At 72 to 80 the chain is on the cytoplasmic side; it reads RRRTRSVTD. Residues 81–101 traverse the membrane as a helical segment; it reads VYVLNLAIADLLFSLTLPFLA. The Extracellular segment spans residues 102 to 116; it reads VSKWKGWIFGTPLCK. Residues C115 and C192 are joined by a disulfide bond. The helical transmembrane segment at 117-138 threads the bilayer; that stretch reads MVSLLKEVNFFSGILLLACISV. At 139–159 the chain is on the cytoplasmic side; the sequence is DRYLAIVHATRTLTRKRYLVK. A helical membrane pass occupies residues 160–179; sequence FVCMGTWGLSLVLSLPFAIF. The Extracellular portion of the chain corresponds to 180 to 204; that stretch reads RQAYKPYRSGTVCYEVLGEATADLR. A helical membrane pass occupies residues 205-225; it reads ITLRGLSHIFGFLLPLFIMLV. Topologically, residues 226 to 247 are cytoplasmic; sequence CYGLTLRTLFKAHMRQKRRAMW. A helical transmembrane segment spans residues 248–269; the sequence is VIFAVVLVFLLCCLPYNLVLLS. Residues 270-290 lie on the Extracellular side of the membrane; that stretch reads DTLLGAHLIQDTCERRNNIDQ. A helical transmembrane segment spans residues 291–313; sequence ALYITEILGFSHSCLNPVIYAFV. At 314 to 349 the chain is on the cytoplasmic side; sequence GQSFRHEFLKILANLVHKEVLTHHSASFRTSLTTIY.

The protein belongs to the G-protein coupled receptor 1 family. Interacts with IL8. Interacts with GNAI2.

It is found in the cell membrane. Its function is as follows. Receptor to interleukin-8, which is a powerful neutrophils chemotactic factor. Binding of IL-8 to the receptor causes activation of neutrophils. This response is mediated via a G-protein that activates a phosphatidylinositol-calcium second messenger system. This Rattus norvegicus (Rat) protein is C-X-C chemokine receptor type 1 (Cxcr1).